Here is a 567-residue protein sequence, read N- to C-terminus: Adenine deaminase 2 (567 aa).

The protein belongs to the metallo-dependent hydrolases superfamily. Adenine deaminase family. It depends on Mn(2+) as a cofactor.

The catalysed reaction is adenine + H2O + H(+) = hypoxanthine + NH4(+). This Oenococcus oeni (strain ATCC BAA-331 / PSU-1) protein is Adenine deaminase 2.